The following is a 281-amino-acid chain: ATP phosphoribosyltransferase (281 aa).

This sequence belongs to the ATP phosphoribosyltransferase family. Long subfamily. Requires Mg(2+) as cofactor.

The protein localises to the cytoplasm. It carries out the reaction 1-(5-phospho-beta-D-ribosyl)-ATP + diphosphate = 5-phospho-alpha-D-ribose 1-diphosphate + ATP. The protein operates within amino-acid biosynthesis; L-histidine biosynthesis; L-histidine from 5-phospho-alpha-D-ribose 1-diphosphate: step 1/9. Its activity is regulated as follows. Feedback inhibited by histidine. In terms of biological role, catalyzes the condensation of ATP and 5-phosphoribose 1-diphosphate to form N'-(5'-phosphoribosyl)-ATP (PR-ATP). Has a crucial role in the pathway because the rate of histidine biosynthesis seems to be controlled primarily by regulation of HisG enzymatic activity. The sequence is that of ATP phosphoribosyltransferase from Corynebacterium aurimucosum (strain ATCC 700975 / DSM 44827 / CIP 107346 / CN-1) (Corynebacterium nigricans).